The chain runs to 555 residues: Formate--tetrahydrofolate ligase (555 aa).

This sequence belongs to the formate--tetrahydrofolate ligase family.

The catalysed reaction is (6S)-5,6,7,8-tetrahydrofolate + formate + ATP = (6R)-10-formyltetrahydrofolate + ADP + phosphate. The protein operates within one-carbon metabolism; tetrahydrofolate interconversion. The protein is Formate--tetrahydrofolate ligase of Porphyromonas gingivalis (strain ATCC BAA-308 / W83).